The following is a 513-amino-acid chain: Cytochrome P450 705A1 (513 aa).

The helical transmembrane segment at Q9–F29 threads the bilayer. Heme is bound at residue C448.

It belongs to the cytochrome P450 family. It depends on heme as a cofactor. As to expression, expressed in root stele, root cortex, root epidermis, root pericycle of the root hair zone, and quiescent center at the root meristematic zone.

The protein localises to the membrane. In terms of biological role, cleaves the arabidiol side chain at C15 to form 14-apo-arabidiol and a side-chain fragment. Involved in the biosynthesis of the volatile homoterpene (E)-4,8-dimethyl-1,3,7-nonatriene (DMNT) in roots. Involved in the production of DMNT by degrading the triterpene arabidiol. May be involved in the defense again the fungal root pathogen Pythium irregulare by producing DMNT. The polypeptide is Cytochrome P450 705A1 (Arabidopsis thaliana (Mouse-ear cress)).